Reading from the N-terminus, the 430-residue chain is Xaa-Pro aminopeptidase (430 aa).

Positions 254, 265, 348, 377, and 400 each coordinate Mn(2+).

The protein belongs to the peptidase M24B family. Homotetramer. Mn(2+) serves as cofactor.

It carries out the reaction Release of any N-terminal amino acid, including proline, that is linked to proline, even from a dipeptide or tripeptide.. The sequence is that of Xaa-Pro aminopeptidase (pepP) from Haemophilus influenzae (strain ATCC 51907 / DSM 11121 / KW20 / Rd).